Here is a 431-residue protein sequence, read N- to C-terminus: Cleavage stimulation factor subunit 1 (431 aa).

The interval 14 to 35 (LYKLIISQLLYDGYISIANGLI) is hydrophobic. WD repeat units lie at residues 106–145 (SHKG…AKSA), 171–210 (DHVD…AKRA), 215–254 (QEAE…CFVS), 260–301 (QHTD…TTFE), 303–343 (AHDG…TLVR), and 395–430 (GHNN…RSTT).

Homodimer. The CSTF complex is composed of CSTF1 (50 kDa subunit), CSTF2 (64 kDa subunit) and CSTF3 (77 kDa subunit). Interacts (via repeats WD) directly with CSTF3. Interacts (via repeat WD6) with BARD1. Interacts with ERCC6. Post-translationally, the N-terminus is blocked.

It is found in the nucleus. In terms of biological role, one of the multiple factors required for polyadenylation and 3'-end cleavage of mammalian pre-mRNAs. May be responsible for the interaction of CSTF with other factors to form a stable complex on the pre-mRNA. The protein is Cleavage stimulation factor subunit 1 (CSTF1) of Homo sapiens (Human).